We begin with the raw amino-acid sequence, 314 residues long: MTTTYVKKFDGNTAALGRTLVLFGGTSSEREVSLRSGAAVLQALQAGGVDAHGLDVQADAIAKIEAFAPDRVFIALHGPGGEDGKMQAVLDWLAIPYTGSDHAASALAMDKLKTKQVWQSVGLVTPEYASLVENSDWQAVLDSLGGQGFVKPAHEGSSIGMSVVSTAQELKAAYEKAAHYDAKVLVERRIVGREFTVAVLNGVALPAIGLKTDHVFYDYDAKYVSNTTQYLCPCGLTQEKEAELQSIAQQAFAAVGCKGWGRVDFMQDEAGNFYLLEVNTVPGMTDHSLVPMAARQSGIEFNELVLEILAQTLV.

The ATP-grasp domain maps to 115–310 (KQVWQSVGLV…FNELVLEILA (196 aa)). 141 to 196 (LDSLGGQGFVKPAHEGSSIGMSVVSTAQELKAAYEKAAHYDAKVLVERRIVGREFT) contacts ATP. Aspartate 264, glutamate 277, and asparagine 279 together coordinate Mg(2+).

The protein belongs to the D-alanine--D-alanine ligase family. It depends on Mg(2+) as a cofactor. Requires Mn(2+) as cofactor.

Its subcellular location is the cytoplasm. It catalyses the reaction 2 D-alanine + ATP = D-alanyl-D-alanine + ADP + phosphate + H(+). The protein operates within cell wall biogenesis; peptidoglycan biosynthesis. Functionally, cell wall formation. The chain is D-alanine--D-alanine ligase from Saccharophagus degradans (strain 2-40 / ATCC 43961 / DSM 17024).